The following is a 229-amino-acid chain: MVEMSNVRKEIVAFIVLLSLLLLWTLFTQAPINTSTPVNTSTPVNTSTPVNTSTPVNTSTPVSTSTIDPESQVAGMAIQFKNGTSESEVKSTLQNYNMTQNYRITFDANHYPEYYIMVNKENITDVKGKLEKEKTWTEPIPAIEKGNYYIITISERVIHNKNFIMMLSKYNLQLEKFVWCDIRFLYSDGPLTYWISKEDAIRLKNELEQNENIFTIRFDYLYPPYDPTT.

The span at 35–66 shows a compositional bias: low complexity; sequence STPVNTSTPVNTSTPVNTSTPVNTSTPVSTST. A disordered region spans residues 35-67; sequence STPVNTSTPVNTSTPVNTSTPVNTSTPVSTSTI.

Belongs to the UPF0228 family.

This chain is UPF0228 protein MA_3119, found in Methanosarcina acetivorans (strain ATCC 35395 / DSM 2834 / JCM 12185 / C2A).